Here is a 205-residue protein sequence, read N- to C-terminus: MEKKMNTDLFYLTLKQKRYKRKKNIPLRIRLDKNDLSANTASIKFTDKPYLVANKIIKSLEFNATSLYRCIKKNKLRSENFSVQLSRRLLRTKKTLVLPSHVNITLISNSYDVIHSWFIPALGIKIDCVPGRATHHTFYCDSVGFYYGQCAEICGRYHHHMPIKLCILPFEHFLIWWQHFGLPKLLFTESKNRFETDYGLKKFCW.

Cu cation contacts are provided by histidine 115, cysteine 150, glutamate 152, cysteine 154, histidine 158, and methionine 161. A Mg(2+)-binding site is contributed by glutamate 152.

This sequence belongs to the cytochrome c oxidase subunit 2 family. In terms of assembly, component of the cytochrome c oxidase (complex IV, CIV), a multisubunit enzyme composed of a catalytic core of 3 subunits and several supernumerary subunits. The complex exists as a monomer or a dimer and forms supercomplexes (SCs) in the inner mitochondrial membrane with ubiquinol-cytochrome c oxidoreductase (cytochrome b-c1 complex, complex III, CIII). The cofactor is Cu cation.

It is found in the mitochondrion inner membrane. The enzyme catalyses 4 Fe(II)-[cytochrome c] + O2 + 8 H(+)(in) = 4 Fe(III)-[cytochrome c] + 2 H2O + 4 H(+)(out). Its function is as follows. Component of the cytochrome c oxidase, the last enzyme in the mitochondrial electron transport chain which drives oxidative phosphorylation. The respiratory chain contains 3 multisubunit complexes succinate dehydrogenase (complex II, CII), ubiquinol-cytochrome c oxidoreductase (cytochrome b-c1 complex, complex III, CIII) and cytochrome c oxidase (complex IV, CIV), that cooperate to transfer electrons derived from NADH and succinate to molecular oxygen, creating an electrochemical gradient over the inner membrane that drives transmembrane transport and the ATP synthase. Cytochrome c oxidase is the component of the respiratory chain that catalyzes the reduction of oxygen to water. Electrons originating from reduced cytochrome c in the intermembrane space (IMS) are transferred via the dinuclear copper A center (CU(A)) of subunit 2 and heme A of subunit 1 to the active site in subunit 1, a binuclear center (BNC) formed by heme A3 and copper B (CU(B)). The BNC reduces molecular oxygen to 2 water molecules using 4 electrons from cytochrome c in the IMS and 4 protons from the mitochondrial matrix. The chain is Cytochrome c oxidase subunit 2 (COII) from Paramecium tetraurelia.